A 267-amino-acid polypeptide reads, in one-letter code: Probable membrane transporter protein MJ0441 (267 aa).

A run of 7 helical transmembrane segments spans residues 10–30 (LLLLPLLIIVGFIVGILGSLF), 31–51 (GIGGGFLVAPILTFIFDYFGI), 55–75 (VKFAVGTSLFVVFINSIISIF), 87–107 (ASITIGIISLVFSYFSGFLVV), 158–178 (FLSGLFGIGGGIVIIPILAMA), 185–205 (AVAISVGVIPLTSIGGLISYL), and 213–233 (IYNIGYVSIPIALIMAIPIIY).

This sequence belongs to the 4-toluene sulfonate uptake permease (TSUP) (TC 2.A.102) family.

It localises to the cell membrane. The chain is Probable membrane transporter protein MJ0441 from Methanocaldococcus jannaschii (strain ATCC 43067 / DSM 2661 / JAL-1 / JCM 10045 / NBRC 100440) (Methanococcus jannaschii).